The primary structure comprises 282 residues: MKRTVDFSMFRCPLCDSSMDAASGKSLICTERGHTFDLSRHGYVNFLTKPVKTSYGAELFEARSRLIGECGFFDPLHDAIAELISHPKSGHEAFTILDSGCGEGSHLNALCGFDYAGKAAIGTGIDLSKDGILKASKAFKDLMWAVADVARAPFHDRQFDVVLSIFSPSNYAEFHRLLKNDGMLIKVVPRSDYLIELRQFLYTDSPRRTYSNTAAVERFTANAAHSRPVRLRYVKTLDQQAIHWLLKMTPLAWSAPKDRVSLLKEMKSADITVDVDILIGMK.

Positions 12, 15, 29, and 34 each coordinate Zn(2+). 103–104 contacts S-adenosyl-L-methionine; the sequence is EG.

The protein belongs to the methyltransferase superfamily. RlmA family.

The polypeptide is Putative 23S rRNA (guanine-N(1)-)-methyltransferase YxjB (yxjB) (Bacillus subtilis (strain 168)).